The primary structure comprises 895 residues: Protein translocase subunit SecA (895 aa).

Residues glutamine 87, 105-109 (GEGKT), and aspartate 512 contribute to the ATP site. Residues 833–852 (TQEEVEQAERQRQEMAKRET) show a composition bias toward basic and acidic residues. A disordered region spans residues 833–895 (TQEEVEQAER…KHCHGSKAKY (63 aa)). Zn(2+) contacts are provided by cysteine 877, cysteine 879, cysteine 888, and histidine 889. Basic residues predominate over residues 883-895 (KKYKHCHGSKAKY).

Belongs to the SecA family. Monomer and homodimer. Part of the essential Sec protein translocation apparatus which comprises SecA, SecYEG and auxiliary proteins SecDF-YajC and YidC. The cofactor is Zn(2+).

It localises to the cell inner membrane. The protein resides in the cytoplasm. It carries out the reaction ATP + H2O + cellular proteinSide 1 = ADP + phosphate + cellular proteinSide 2.. Its function is as follows. Part of the Sec protein translocase complex. Interacts with the SecYEG preprotein conducting channel. Has a central role in coupling the hydrolysis of ATP to the transfer of proteins into and across the cell membrane, serving both as a receptor for the preprotein-SecB complex and as an ATP-driven molecular motor driving the stepwise translocation of polypeptide chains across the membrane. The protein is Protein translocase subunit SecA of Pasteurella multocida (strain Pm70).